Consider the following 451-residue polypeptide: MEQQPSVPRSCTNVARETPMNLNIQSTTGTRYELSVPLNETVDGLKRRISQRLKVPKERLTLLHRETRLSSGKLQDLGISDGSRLTLLPSVEAGLMSQMSRPEQSVMQALESLTETQVNDFLSGRSPLTLALRVGDHMMFVQLQLAAQQSGGSHLQHRHVITRGADAGAPPQYRTLHTSTSALSHLASCTPGSTPPTTLSPTSSTHCDAPHSSPLTTSVFRSHGEGVSPCAEQVPCSTRGTEGTSSSPSSRSRKPGAIIESFVNHAPGVFSGTFSGTLHPHCQDGAGRPRRDIGTILQILNDLLSATRHYQGMPPSLTTLRCHTQCASQARNAKATSPQSTGPQQTTHPVGHCQAQTRTCKPSGDRLRQTENRATRCKVERLQLLMHQKRLRRKARRDSRAPYHWMPTRKSSRTSSNSSTSSGEGSLEIDFEDSLWKPDVKAELNSEFVVA.

The Ubiquitin-like domain maps to 20–94; the sequence is MNLNIQSTTG…LTLLPSVEAG (75 aa). Disordered stretches follow at residues 187 to 254, 331 to 372, and 388 to 427; these read ASCT…RSRK, RNAK…QTEN, and QKRLRRKARRDSRAPYHWMPTRKSSRTSSNSSTSSGEGSL. Low complexity-rich tracts occupy residues 190 to 205, 237 to 250, and 336 to 347; these read TPGSTPPTTLSPTSST, STRGTEGTSSSPSS, and TSPQSTGPQQTT. Residues 363–372 are compositionally biased toward basic and acidic residues; that stretch reads SGDRLRQTEN. Positions 388 to 397 are enriched in basic residues; that stretch reads QKRLRRKARR. Positions 413 to 426 are enriched in low complexity; the sequence is RTSSNSSTSSGEGS.

It localises to the nucleus. Its subcellular location is the cytoplasm. The protein localises to the cytosol. The protein resides in the nucleolus. In terms of biological role, facilitates ubiquitin-independent proteasomal degradation of polycomb protein CBX4. Plays a role in inhibiting the activity of glucokinase GCK and both glucose-induced and basal insulin secretion. The sequence is that of Midnolin-B (midn-b) from Xenopus laevis (African clawed frog).